The primary structure comprises 270 residues: Phospholipase A and acyltransferase 5 (270 aa).

Disordered stretches follow at residues 1 to 54 and 70 to 122; these read MGLS…SASS and RRLE…NPRP. 2 stretches are compositionally biased toward polar residues: residues 24-54 and 100-116; these read TQISKTSSTESSDTQSATGQSTVPHSDSASS and IPTSNSEIESTQKNQAV. The LRAT domain occupies 127-240; it reads LIEIFRIGYE…LRYGVPRSQQ (114 aa). Active-site residues include His-137 and His-149. The active-site Acyl-thioester intermediate is Cys-224.

This sequence belongs to the H-rev107 family. As to expression, isoform 4 shows highest expression level in testis.

Its subcellular location is the cytoplasm. It localises to the cytosol. It carries out the reaction a 1,2-diacyl-sn-glycero-3-phosphocholine + H2O = a 1-acyl-sn-glycero-3-phosphocholine + a fatty acid + H(+). It catalyses the reaction a 1,2-diacyl-sn-glycero-3-phosphocholine + H2O = a 2-acyl-sn-glycero-3-phosphocholine + a fatty acid + H(+). The catalysed reaction is 1-hexadecanoyl-2-(5Z,8Z,11Z,14Z-eicosatetraenoyl)-sn-glycero-3-phosphocholine + 1,2-di-(9Z-octadecenoyl)-sn-glycero-3-phosphoethanolamine = N-(5Z,8Z,11Z,14Z-eicosatetraenoyl)-1,2-di-(9Z-octadecenoyl)-sn-glycero-3-phosphoethanolamine + 1-hexadecanoyl-sn-glycero-3-phosphocholine + H(+). The enzyme catalyses 1,2-di-(9Z-octadecenoyl)-sn-glycero-3-phosphoethanolamine + 1,2-dihexadecanoyl-sn-glycero-3-phosphocholine = N-hexadecanoyl-1,2-di-(9Z-octadecenoyl)-sn-glycero-3-phosphoethanolamine + 1-hexadecanoyl-sn-glycero-3-phosphocholine + H(+). It carries out the reaction 1,2-di-(9Z-octadecenoyl)-sn-glycero-3-phosphoethanolamine + 1,2-dihexadecanoyl-sn-glycero-3-phosphocholine = N-hexadecanoyl-1,2-di-(9Z-octadecenoyl)-sn-glycero-3-phosphoethanolamine + 2-hexadecanoyl-sn-glycero-3-phosphocholine + H(+). It catalyses the reaction a 1,2-diacyl-sn-glycero-3-phosphoethanolamine + a 1,2-diacyl-sn-glycero-3-phosphocholine = an N-acyl-1,2-diacyl-sn-glycero-3-phosphoethanolamine + a 1-acyl-sn-glycero-3-phosphocholine + H(+). The catalysed reaction is a 1,2-diacyl-sn-glycero-3-phosphoethanolamine + a 1,2-diacyl-sn-glycero-3-phosphocholine = an N-acyl-1,2-diacyl-sn-glycero-3-phosphoethanolamine + a 2-acyl-sn-glycero-3-phosphocholine + H(+). The enzyme catalyses 1-hexadecanoyl-2-(9Z-octadecenoyl)-sn-glycero-3-phosphocholine + 1,2-di-(9Z-octadecenoyl)-sn-glycero-3-phosphoethanolamine = N,1,2-tri-(9Z-octadecenoyl)-sn-glycero-3-phosphoethanolamine + 1-hexadecanoyl-sn-glycero-3-phosphocholine + H(+). Exhibits both phospholipase A1/2 and acyltransferase activities. Shows phospholipase A1 (PLA1) and A2 (PLA2) activity, catalyzing the calcium-independent release of fatty acids from the sn-1 or sn-2 position of glycerophospholipids. Shows N-acyltransferase activity, catalyzing the calcium-independent transfer of a fatty acyl group at the sn-1 position of phosphatidylcholine (PC) and other glycerophospholipids to the primary amine of phosphatidylethanolamine (PE), forming N-acylphosphatidylethanolamine (NAPE), which serves as precursor for N-acylethanolamines (NAEs). The sequence is that of Phospholipase A and acyltransferase 5 from Mus musculus (Mouse).